The following is a 472-amino-acid chain: 3-isopropylmalate dehydratase large subunit (472 aa).

[4Fe-4S] cluster contacts are provided by Cys-347, Cys-407, and Cys-410.

It belongs to the aconitase/IPM isomerase family. LeuC type 1 subfamily. In terms of assembly, heterodimer of LeuC and LeuD. [4Fe-4S] cluster serves as cofactor.

The enzyme catalyses (2R,3S)-3-isopropylmalate = (2S)-2-isopropylmalate. The protein operates within amino-acid biosynthesis; L-leucine biosynthesis; L-leucine from 3-methyl-2-oxobutanoate: step 2/4. Functionally, catalyzes the isomerization between 2-isopropylmalate and 3-isopropylmalate, via the formation of 2-isopropylmaleate. This chain is 3-isopropylmalate dehydratase large subunit, found in Bacillus subtilis (strain 168).